Here is a 776-residue protein sequence, read N- to C-terminus: Protein translocase subunit SecA 2 (776 aa).

Residues Gln80, 98 to 102, and Asp486 each bind ATP; that span reads GEGKT.

It belongs to the SecA family. As to quaternary structure, monomer and homodimer. Part of the essential Sec protein translocation apparatus which comprises SecA, SecYEG and auxiliary proteins SecDF. Other proteins may also be involved.

The protein localises to the cell membrane. The protein resides in the cytoplasm. It carries out the reaction ATP + H2O + cellular proteinSide 1 = ADP + phosphate + cellular proteinSide 2.. Its function is as follows. Part of the Sec protein translocase complex. Interacts with the SecYEG preprotein conducting channel. Has a central role in coupling the hydrolysis of ATP to the transfer of proteins into and across the cell membrane, serving as an ATP-driven molecular motor driving the stepwise translocation of polypeptide chains across the membrane. The sequence is that of Protein translocase subunit SecA 2 from Listeria innocua serovar 6a (strain ATCC BAA-680 / CLIP 11262).